Here is a 78-residue protein sequence, read N- to C-terminus: MEVKIFRVKGTFEKGGKKFRFTKEYRALKPEDVRELVFSDIGSKHRVKRAKIFIESIEEIEPVEAENLVVKRLSLELA.

The protein belongs to the eukaryotic ribosomal protein eL20 family. In terms of assembly, part of the 50S ribosomal subunit. Binds 23S rRNA.

In Thermococcus sibiricus (strain DSM 12597 / MM 739), this protein is Large ribosomal subunit protein eL20.